The primary structure comprises 130 residues: MAEYGTLLQDLTNNITLEDLEQLKSACKEDIPSEKSEEITTGSAWFSFLESHNKLDKDNLSYIEHIFEISRRPDLLTMVVDYRTRVLKISEEEELDTKLTRIPSAKKYKDIIRQPSEEEIIKLAPPPKKA.

The 79-residue stretch at 3–81 (EYGTLLQDLT…RPDLLTMVVD (79 aa)) folds into the DED domain. 2 positions are modified to phosphoserine: Ser61 and Ser90. Positions 98-107 (KLTRIPSAKK) are microtubule-binding. Phosphoserine; by PKC is present on Ser104. Phosphoserine; by CaMK2 is present on Ser116. Positions 122-129 (KLAPPPKK) are microtubule-binding.

As to quaternary structure, binds RPS6KA3, MAPK3 and MAPK1. Interacts with CASP8 and FADD. Transient interaction with PLD1 and PLD2. In terms of processing, phosphorylated by protein kinase C and calcium-calmodulin-dependent protein kinase. These phosphorylation events are modulated by neurotransmitters or hormones. Predominantly expressed in the brain. Low levels in some peripheral organs.

It localises to the cytoplasm. Blocks Ras-mediated inhibition of integrin activation and modulates the ERK MAP kinase cascade. Inhibits RPS6KA3 activities by retaining it in the cytoplasm. Inhibits both TNFRSF6- and TNFRSF1A-mediated CASP8 activity and apoptosis. Regulates glucose transport by controlling both the content of SLC2A1 glucose transporters on the plasma membrane and the insulin-dependent trafficking of SLC2A4 from the cell interior to the surface. This chain is Astrocytic phosphoprotein PEA-15 (Pea15), found in Mus musculus (Mouse).